The primary structure comprises 561 residues: DNA ligase B (561 aa).

Lysine 125 acts as the N6-AMP-lysine intermediate in catalysis.

Belongs to the NAD-dependent DNA ligase family. LigB subfamily.

It carries out the reaction NAD(+) + (deoxyribonucleotide)n-3'-hydroxyl + 5'-phospho-(deoxyribonucleotide)m = (deoxyribonucleotide)n+m + AMP + beta-nicotinamide D-nucleotide.. In terms of biological role, catalyzes the formation of phosphodiester linkages between 5'-phosphoryl and 3'-hydroxyl groups in double-stranded DNA using NAD as a coenzyme and as the energy source for the reaction. This is DNA ligase B from Salmonella newport (strain SL254).